The following is a 141-amino-acid chain: Nucleoside diphosphate kinase (141 aa).

ATP-binding residues include lysine 11, phenylalanine 59, arginine 87, threonine 93, arginine 104, and asparagine 114. The active-site Pros-phosphohistidine intermediate is the histidine 117.

Belongs to the NDK family. Homotetramer. Requires Mg(2+) as cofactor.

It localises to the cytoplasm. It catalyses the reaction a 2'-deoxyribonucleoside 5'-diphosphate + ATP = a 2'-deoxyribonucleoside 5'-triphosphate + ADP. The catalysed reaction is a ribonucleoside 5'-diphosphate + ATP = a ribonucleoside 5'-triphosphate + ADP. Major role in the synthesis of nucleoside triphosphates other than ATP. The ATP gamma phosphate is transferred to the NDP beta phosphate via a ping-pong mechanism, using a phosphorylated active-site intermediate. The protein is Nucleoside diphosphate kinase of Polaromonas sp. (strain JS666 / ATCC BAA-500).